We begin with the raw amino-acid sequence, 218 residues long: 3-dehydroquinate dehydratase (218 aa).

Residues 29 to 31 (EFR) and arginine 56 contribute to the 3-dehydroquinate site. Histidine 116 (proton donor/acceptor) is an active-site residue. Lysine 142 functions as the Schiff-base intermediate with substrate in the catalytic mechanism. 3-dehydroquinate-binding residues include arginine 180, serine 200, and glutamine 204.

Belongs to the type-I 3-dehydroquinase family. In terms of assembly, homodimer.

It carries out the reaction 3-dehydroquinate = 3-dehydroshikimate + H2O. The protein operates within metabolic intermediate biosynthesis; chorismate biosynthesis; chorismate from D-erythrose 4-phosphate and phosphoenolpyruvate: step 3/7. Its function is as follows. Involved in the third step of the chorismate pathway, which leads to the biosynthesis of aromatic amino acids. Catalyzes the cis-dehydration of 3-dehydroquinate (DHQ) and introduces the first double bond of the aromatic ring to yield 3-dehydroshikimate. This chain is 3-dehydroquinate dehydratase, found in Methanococcus maripaludis (strain C7 / ATCC BAA-1331).